The primary structure comprises 365 residues: Heat-inducible transcription repressor HrcA (365 aa).

Belongs to the HrcA family.

Negative regulator of class I heat shock genes (grpE-dnaK-dnaJ and groELS operons). Prevents heat-shock induction of these operons. This is Heat-inducible transcription repressor HrcA from Trichormus variabilis (strain ATCC 29413 / PCC 7937) (Anabaena variabilis).